The sequence spans 346 residues: N-acetyl-gamma-glutamyl-phosphate reductase (346 aa).

Residue C149 is part of the active site.

This sequence belongs to the NAGSA dehydrogenase family. Type 1 subfamily.

It localises to the cytoplasm. The catalysed reaction is N-acetyl-L-glutamate 5-semialdehyde + phosphate + NADP(+) = N-acetyl-L-glutamyl 5-phosphate + NADPH + H(+). Its pathway is amino-acid biosynthesis; L-arginine biosynthesis; N(2)-acetyl-L-ornithine from L-glutamate: step 3/4. Functionally, catalyzes the NADPH-dependent reduction of N-acetyl-5-glutamyl phosphate to yield N-acetyl-L-glutamate 5-semialdehyde. In Desulfotalea psychrophila (strain LSv54 / DSM 12343), this protein is N-acetyl-gamma-glutamyl-phosphate reductase.